The following is a 489-amino-acid chain: Male-specific lethal 1-like 1 (489 aa).

Disordered stretches follow at residues 126–164 and 224–311; these read PMVS…VRKG and VKKD…EDMQ. Positions 179 to 227 form a coiled coil; sequence LLLQLELIEQQQKHLHNKNKEIEDLKAEKEMLMARIERMEHRLQMVKKD. In terms of domain architecture, PEHE spans 347 to 466; it reads TVEVPSWRES…LKQQDFDLPW (120 aa). The tract at residues 371–389 is interaction with KAT8 HAT domain; sequence ECLDDSVFLKRHSKLELDE. A Bipartite nuclear localization signal motif is present at residues 380–394; it reads KRHSKLELDEKRRKR.

The protein belongs to the msl-1 family. In terms of assembly, component of a multisubunit histone acetyltransferase complex (MSL). Interacts (via PEHE domain) with KAT8 (via HAT domain) and MSL3 (via MRG domain); both interactions are direct.

It localises to the nucleus. The protein resides in the nucleoplasm. Its subcellular location is the nucleus speckle. Functionally, component of histone acetyltransferase complex. Within MSL complex, promotes ubiquitination of histone H2B. This is Male-specific lethal 1-like 1 (msl1l1) from Danio rerio (Zebrafish).